A 34-amino-acid polypeptide reads, in one-letter code: Turripeptide OL127 (34 aa).

Post-translationally, contains 4 disulfide bonds. In terms of tissue distribution, expressed by the venom duct.

The protein resides in the secreted. Acts as a neurotoxin by inhibiting an ion channel. This is Turripeptide OL127 from Iotyrris olangoensis (Sea snail).